The primary structure comprises 230 residues: TPR repeat-containing protein BB_0298 (230 aa).

TPR repeat units lie at residues 69-102 (ARFFNLIGLEFFKLGQYGPAIEYFAKNLEINPNN) and 183-216 (FEFLMLRGANYYSLGDLGNAILFYDKASKKASTE).

The polypeptide is TPR repeat-containing protein BB_0298 (Borreliella burgdorferi (strain ATCC 35210 / DSM 4680 / CIP 102532 / B31) (Borrelia burgdorferi)).